The sequence spans 96 residues: YcgL domain-containing protein Csal_1462 (96 aa).

Positions 4–88 (RLCEIFKSPR…ARESYLLDLY (85 aa)) constitute a YcgL domain.

The polypeptide is YcgL domain-containing protein Csal_1462 (Chromohalobacter salexigens (strain ATCC BAA-138 / DSM 3043 / CIP 106854 / NCIMB 13768 / 1H11)).